The sequence spans 485 residues: Myocardial zonula adherens protein (485 aa).

The span at 1-18 (MMRYGSAATVTTSETASS) shows a compositional bias: low complexity. Disordered stretches follow at residues 1-21 (MMRY…SQKP) and 40-65 (KQEE…KKRN).

Belongs to the MYZAP family.

The sequence is that of Myocardial zonula adherens protein (myzap) from Xenopus tropicalis (Western clawed frog).